The following is a 98-amino-acid chain: NADH-ubiquinone oxidoreductase chain 4L (98 aa).

3 consecutive transmembrane segments (helical) span residues 1 to 21 (MSMVYANIFLAFIMSLMGLLM), 29 to 49 (SLLCLEGMMLSLFVMMTVTIL), and 61 to 81 (IILLVFAACEAALGLSLLVMV).

The protein belongs to the complex I subunit 4L family. In terms of assembly, core subunit of respiratory chain NADH dehydrogenase (Complex I) which is composed of 45 different subunits.

It localises to the mitochondrion inner membrane. The catalysed reaction is a ubiquinone + NADH + 5 H(+)(in) = a ubiquinol + NAD(+) + 4 H(+)(out). Its function is as follows. Core subunit of the mitochondrial membrane respiratory chain NADH dehydrogenase (Complex I) which catalyzes electron transfer from NADH through the respiratory chain, using ubiquinone as an electron acceptor. Part of the enzyme membrane arm which is embedded in the lipid bilayer and involved in proton translocation. The protein is NADH-ubiquinone oxidoreductase chain 4L (MT-ND4L) of Erignathus barbatus (Bearded seal).